The sequence spans 367 residues: Glutamate 5-kinase (367 aa).

Position 10 (K10) interacts with ATP. Positions 50, 137, and 149 each coordinate substrate. Residues 169 to 170 (TD) and 211 to 217 (TGGMETK) each bind ATP. A PUA domain is found at 275–353 (AGDITVDDGA…QDISDILGYE (79 aa)).

It belongs to the glutamate 5-kinase family.

The protein localises to the cytoplasm. It carries out the reaction L-glutamate + ATP = L-glutamyl 5-phosphate + ADP. The protein operates within amino-acid biosynthesis; L-proline biosynthesis; L-glutamate 5-semialdehyde from L-glutamate: step 1/2. Catalyzes the transfer of a phosphate group to glutamate to form L-glutamate 5-phosphate. This is Glutamate 5-kinase from Sodalis glossinidius (strain morsitans).